A 328-amino-acid chain; its full sequence is NADH-quinone oxidoreductase subunit H 1 (328 aa).

8 helical membrane-spanning segments follow: residues 11 to 31 (VVKA…FLLF), 81 to 101 (LAPV…PWAP), 116 to 136 (VLVI…GGWA), 154 to 174 (ISYE…TGSV), 189 to 209 (LFPQ…EAGW), 235 to 257 (GLFF…TFFL), 269 to 289 (IPGF…LYWI), and 308 to 328 (VLLP…ALWA).

The protein belongs to the complex I subunit 1 family. In terms of assembly, NDH-1 is composed of 14 different subunits. Subunits NuoA, H, J, K, L, M, N constitute the membrane sector of the complex.

It localises to the cell membrane. The enzyme catalyses a quinone + NADH + 5 H(+)(in) = a quinol + NAD(+) + 4 H(+)(out). NDH-1 shuttles electrons from NADH, via FMN and iron-sulfur (Fe-S) centers, to quinones in the respiratory chain. The immediate electron acceptor for the enzyme in this species is believed to be ubiquinone. Couples the redox reaction to proton translocation (for every two electrons transferred, four hydrogen ions are translocated across the cytoplasmic membrane), and thus conserves the redox energy in a proton gradient. This subunit may bind ubiquinone. This Symbiobacterium thermophilum (strain DSM 24528 / JCM 14929 / IAM 14863 / T) protein is NADH-quinone oxidoreductase subunit H 1.